The following is a 292-amino-acid chain: 4-hydroxy-tetrahydrodipicolinate synthase (292 aa).

Thr45 provides a ligand contact to pyruvate. The active-site Proton donor/acceptor is Tyr133. Residue Lys161 is the Schiff-base intermediate with substrate of the active site. Ile203 is a binding site for pyruvate.

Belongs to the DapA family. In terms of assembly, homotetramer; dimer of dimers.

The protein localises to the cytoplasm. It carries out the reaction L-aspartate 4-semialdehyde + pyruvate = (2S,4S)-4-hydroxy-2,3,4,5-tetrahydrodipicolinate + H2O + H(+). Its pathway is amino-acid biosynthesis; L-lysine biosynthesis via DAP pathway; (S)-tetrahydrodipicolinate from L-aspartate: step 3/4. Catalyzes the condensation of (S)-aspartate-beta-semialdehyde [(S)-ASA] and pyruvate to 4-hydroxy-tetrahydrodipicolinate (HTPA). The polypeptide is 4-hydroxy-tetrahydrodipicolinate synthase (Erwinia tasmaniensis (strain DSM 17950 / CFBP 7177 / CIP 109463 / NCPPB 4357 / Et1/99)).